Reading from the N-terminus, the 366-residue chain is 3-dehydroquinate synthase (366 aa).

Residues 71 to 76, 105 to 109, 129 to 130, Lys-142, Lys-151, and 169 to 172 each bind NAD(+); these read DGEKYK, GVIGD, TT, and TLQT. Zn(2+)-binding residues include Glu-184, His-247, and His-264.

The protein belongs to the sugar phosphate cyclases superfamily. Dehydroquinate synthase family. It depends on Co(2+) as a cofactor. Zn(2+) serves as cofactor. The cofactor is NAD(+).

It is found in the cytoplasm. The enzyme catalyses 7-phospho-2-dehydro-3-deoxy-D-arabino-heptonate = 3-dehydroquinate + phosphate. The protein operates within metabolic intermediate biosynthesis; chorismate biosynthesis; chorismate from D-erythrose 4-phosphate and phosphoenolpyruvate: step 2/7. Its function is as follows. Catalyzes the conversion of 3-deoxy-D-arabino-heptulosonate 7-phosphate (DAHP) to dehydroquinate (DHQ). This chain is 3-dehydroquinate synthase, found in Actinobacillus pleuropneumoniae serotype 5b (strain L20).